A 218-amino-acid chain; its full sequence is Small ribosomal subunit protein uS5 (218 aa).

Residues 1 to 45 (MPGRQRRDGGNGPAGQNSNGPEGRDNRRGGGDRRGGGDRRDNAAE) are disordered. The span at 22–45 (EGRDNRRGGGDRRGGGDRRDNAAE) shows a compositional bias: basic and acidic residues. Residues 48-111 (QLERVVAINR…EEARKGFFRV (64 aa)) form the S5 DRBM domain.

This sequence belongs to the universal ribosomal protein uS5 family. As to quaternary structure, part of the 30S ribosomal subunit. Contacts proteins S4 and S8.

Its function is as follows. With S4 and S12 plays an important role in translational accuracy. Functionally, located at the back of the 30S subunit body where it stabilizes the conformation of the head with respect to the body. The protein is Small ribosomal subunit protein uS5 of Nocardia farcinica (strain IFM 10152).